We begin with the raw amino-acid sequence, 77 residues long: VpAmp2.0 (77 aa).

Positions 1–23 are cleaved as a signal peptide; the sequence is MQLRKALLVIFVAYLLVTDEAEA. The propeptide occupies 49 to 77; it reads RKREIEDLFDPYQKDLDLQRLDRFFSQFQ.

Belongs to the non-disulfide-bridged peptide (NDBP) superfamily. Medium-length antimicrobial peptide (group 3) family. Expressed by the venom gland.

The protein localises to the secreted. It is found in the target cell membrane. In terms of biological role, antimicrobial peptide with potent activity against Gram-positive bacteria S.aureus (MIC=10 uM) and S.agalactiaea (MIC=15 uM), and Gram-negative bacteria E.coli (MIC=24 uM) and P.aeruginosa (MIC=15 uM), as well as against yeasts Candida albicans (MIC=3.1 uM) and C.glabrata (MIC=25 uM). Also elicits low hemolysis on human erythrocytes (HC(50)=167 uM). The protein is VpAmp2.0 of Mesomexovis punctatus (Scorpion).